Here is an 827-residue protein sequence, read N- to C-terminus: MVMRMVFVENKINGVENIRQEIDNLNVSNYKEIYDKFKNVFSKNRDIFNYYVDKLIELMKNLDDNELSLEIDKFMLCILKDSIIWEFKAGGSVWDLSIKDIKDNIIILGCSNHLFALDIKTGNKIWEYKVEHNVDSLFIKDNIVMLEYRGGHVCVLDVMTGDKIWESKVGERMWGFSLKDNIVILGDGDKYIYAIDVRTGGKLWEFEAEWCVWELSIKDDKIILRCEDEYGCEYFYVLDIKTGEKILEFGGEWHVSDLLISGDVTILADMWGCVYALDTNLYSKIQRVRPQLTNIMKEIVKIDLTLLKKSLNLNEWDELPIQITNKSLKDITISKISIINEEDILFKDIEPIKIRGRDTKVINLFINPKVKGKLPIDIVVEFEDEFNIRYKERFTEVLTITKFKGDNVDDMRPEKIDKILKQEIDNLNTSNYKEIYSRFKNIFNENRAVFNYYMNKLIELVNNSNDELAINVGKFILDILGIKRVDELLWEFRAEGGVRLLSIKGDIVILGCVSGHVYAIDIKTGKKLWEFKAEDTVWGLSIKDDIVVLGCGNIFESIVMLKNGKILEEGYAYALDINTGREIWRSKIKHDVRSLSIKDDIVVLGCKKGYILALDINAGNMLWEFKAKSGKSIRNLSIKNDILLFGCDNYLYALDIDTGRELWRFKAEGEVKSLSIKKDNVLLGCRGGYVYLLDINTGEKMERFKVVGSVLRLSIKDDIVILGCNRECVYALDINAGENLWAFKTDGDVNGLSIKNDAVLLGCDNYLYALDINTGEEIWKFKTESAVLDLSIKDNIVISGCKRGHVYALDFNIIKNYSIIQKIKQVL.

This is an uncharacterized protein from Methanocaldococcus jannaschii (strain ATCC 43067 / DSM 2661 / JAL-1 / JCM 10045 / NBRC 100440) (Methanococcus jannaschii).